We begin with the raw amino-acid sequence, 442 residues long: MEILLIVLGAVVAGLLCPVQTAAEATITLTGSDIPTSISIHHGTRTPTSSGELSQSTFSSSSTNSSDSFYTTTSASYTLLVGSHTTSTVTANETTLSGNATATETSREPQPTNTRPCNGYAEFCARSYGNITQVAAHNSPFVRPGNIASNQELDVVTQLNDGIRMLQFQTHLVNGTIYLCHSSCDLLNAGTLESYLKKVADWLRDNPYDVVSLLIGNGDFVGVKNFTAPIQSSGLIDHVYTPKNHSIALDDWPTLSEVILSGKRAMVFMDYEANHGEVPYILDEFTYIWETPFSPTDRNFPCDIQRPPGLNEADARKRMYMANHNLNLEISIAGATILVPNTVLLNETNAVSGFGSMGAMAGNCTEKWNRPPNFLLVDYYNIGNVNGSVFQVAAKLNNVTYNGKCCGRTTSLASESVLGRLSGKLEMIYSMIVINILVMTIL.

The first 23 residues, 1 to 23, serve as a signal peptide directing secretion; that stretch reads MEILLIVLGAVVAGLLCPVQTAA. Disordered stretches follow at residues 36–67 and 91–115; these read TSIS…NSSD and ANET…TNTR. The segment covering 48-67 has biased composition (low complexity); sequence TSSGELSQSTFSSSSTNSSD. 11 N-linked (GlcNAc...) asparagine glycosylation sites follow: N64, N92, N99, N130, N174, N225, N244, N346, N363, N386, and N398.

It localises to the secreted. This is an uncharacterized protein from Arthroderma benhamiae (strain ATCC MYA-4681 / CBS 112371) (Trichophyton mentagrophytes).